The chain runs to 150 residues: 3-hydroxyacyl-[acyl-carrier-protein] dehydratase FabZ (150 aa).

Residue His-51 is part of the active site.

This sequence belongs to the thioester dehydratase family. FabZ subfamily.

It is found in the cytoplasm. It carries out the reaction a (3R)-hydroxyacyl-[ACP] = a (2E)-enoyl-[ACP] + H2O. Functionally, involved in unsaturated fatty acids biosynthesis. Catalyzes the dehydration of short chain beta-hydroxyacyl-ACPs and long chain saturated and unsaturated beta-hydroxyacyl-ACPs. This Legionella pneumophila (strain Paris) protein is 3-hydroxyacyl-[acyl-carrier-protein] dehydratase FabZ.